A 375-amino-acid polypeptide reads, in one-letter code: Trichodiene synthase (375 aa).

It belongs to the trichodiene synthase family.

The enzyme catalyses (2E,6E)-farnesyl diphosphate = trichodiene + diphosphate. It participates in sesquiterpene biosynthesis; trichothecene biosynthesis. In terms of biological role, TS is a member of the terpene cyclase group of enzymes. It catalyzes the isomerization and cyclization of farnesyl pyro-phosphate to form trichodiene, the first cyclic intermediate in the biosynthetic pathway for trichothecenes. It serves to branch trichothecene biosynthesis from the isoprenoid pathway. The chain is Trichodiene synthase (TRI5) from Fusarium cortaderiae.